Reading from the N-terminus, the 550-residue chain is Methyl-coenzyme M reductase subunit alpha (550 aa).

A coenzyme F430-binding site is contributed by Gln147. Residues Arg225, 256–257, and Arg270 each bind coenzyme B; that span reads KH. His257 carries the pros-methylhistidine modification. Position 271 is a 5-methylarginine (Arg271). Tyr333 is a coenzyme M binding site. A 2-methylglutamine modification is found at Gln400. Tyr444 contacts coenzyme M. Gly445 bears the 1-thioglycine mark. The residue at position 450 (Asp450) is a (Z)-2,3-didehydroaspartate. Cys452 bears the S-methylcysteine mark.

This sequence belongs to the methyl-coenzyme M reductase alpha subunit family. In terms of assembly, MCR is a hexamer of two alpha, two beta, and two gamma chains, forming a dimer of heterotrimers. Requires coenzyme F430 as cofactor. Post-translationally, the alpha subunit contains six modified amino acids near the active site region. Is methylated on His-257, Arg-271, Gln-400 and Cys-452, probably by the action of specific S-adenosylmethionine-dependent methyltransferases. Also contains a thioglycine at position 445, forming a thiopeptide bond. Contains a didehydroaspartate residue at position 450. The methylation on C5 of Arg-271 is a post-translational methylation not essential in vivo, but which plays a role for the stability and structural integrity of MCR.

Its subcellular location is the cytoplasm. It catalyses the reaction coenzyme B + methyl-coenzyme M = methane + coenzyme M-coenzyme B heterodisulfide. Its pathway is one-carbon metabolism; methyl-coenzyme M reduction; methane from methyl-coenzyme M: step 1/1. Functionally, component of the methyl-coenzyme M reductase (MCR) I that catalyzes the reductive cleavage of methyl-coenzyme M (CoM-S-CH3 or 2-(methylthio)ethanesulfonate) using coenzyme B (CoB or 7-mercaptoheptanoylthreonine phosphate) as reductant which results in the production of methane and the mixed heterodisulfide of CoB and CoM (CoM-S-S-CoB). This is the final step in methanogenesis. The sequence is that of Methyl-coenzyme M reductase subunit alpha (mcrA) from Methanothermobacter thermautotrophicus (strain ATCC 29096 / DSM 1053 / JCM 10044 / NBRC 100330 / Delta H) (Methanobacterium thermoautotrophicum).